Here is a 323-residue protein sequence, read N- to C-terminus: Methionyl-tRNA formyltransferase (323 aa).

113–116 (SLLP) provides a ligand contact to (6S)-5,6,7,8-tetrahydrofolate.

It belongs to the Fmt family.

It carries out the reaction L-methionyl-tRNA(fMet) + (6R)-10-formyltetrahydrofolate = N-formyl-L-methionyl-tRNA(fMet) + (6S)-5,6,7,8-tetrahydrofolate + H(+). In terms of biological role, attaches a formyl group to the free amino group of methionyl-tRNA(fMet). The formyl group appears to play a dual role in the initiator identity of N-formylmethionyl-tRNA by promoting its recognition by IF2 and preventing the misappropriation of this tRNA by the elongation apparatus. The polypeptide is Methionyl-tRNA formyltransferase (Nitrosococcus oceani (strain ATCC 19707 / BCRC 17464 / JCM 30415 / NCIMB 11848 / C-107)).